Reading from the N-terminus, the 107-residue chain is Nucleoid-associated protein Lferr_1592 (107 aa).

The protein belongs to the YbaB/EbfC family. As to quaternary structure, homodimer.

Its subcellular location is the cytoplasm. It localises to the nucleoid. Functionally, binds to DNA and alters its conformation. May be involved in regulation of gene expression, nucleoid organization and DNA protection. This is Nucleoid-associated protein Lferr_1592 from Acidithiobacillus ferrooxidans (strain ATCC 53993 / BNL-5-31) (Leptospirillum ferrooxidans (ATCC 53993)).